Consider the following 297-residue polypeptide: Mitochondrial thiamine pyrophosphate carrier 1 (297 aa).

3 Solcar repeats span residues 13–94, 102–195, and 196–295; these read SHVF…TNAA, PPTI…IRAR, and WPET…LMRV. Transmembrane regions (helical) follow at residues 19 to 36, 75 to 91, 109 to 128, 163 to 187, 203 to 219, and 270 to 287; these read LVSG…IAPL, IMYI…YSYT, LAGA…FDVL, GLGG…AMFG, TAGA…TFPL, and GIGL…INLW.

This sequence belongs to the mitochondrial carrier (TC 2.A.29) family.

The protein localises to the mitochondrion inner membrane. Its function is as follows. Mitochondrial transporter that mediates uptake of thiamine pyrophosphate (ThPP) into mitochondria. This chain is Mitochondrial thiamine pyrophosphate carrier 1 (TPC1), found in Vanderwaltozyma polyspora (strain ATCC 22028 / DSM 70294 / BCRC 21397 / CBS 2163 / NBRC 10782 / NRRL Y-8283 / UCD 57-17) (Kluyveromyces polysporus).